The sequence spans 35 residues: Cupiennin-1d (35 aa).

The residue at position 35 (Glu35) is a Glutamic acid 1-amide.

The protein belongs to the cationic peptide 04 (cupiennin) family. 01 subfamily. As to expression, expressed by the venom gland.

It localises to the secreted. Functionally, has antimicrobial activity against B.subtilis, E.coli, E.faecalis, P.aeruginosa, and S.aureus. Has insecticidal and hemolytic activities. Probably acts by disturbing membrane function with its amphipathic structure. In Cupiennius salei (American wandering spider), this protein is Cupiennin-1d.